Reading from the N-terminus, the 75-residue chain is CDC42 small effector protein 2-C (75 aa).

S-palmitoyl cysteine attachment occurs at residues C10 and C11. In terms of domain architecture, CRIB spans 29-42 (IGEPMNFVHTAHVG).

The protein belongs to the CDC42SE/SPEC family.

Its subcellular location is the cytoplasm. It localises to the cytoskeleton. The protein localises to the cell membrane. Probably involved in the organization of the actin cytoskeleton by acting downstream of CDC42, inducing actin filament assembly. The polypeptide is CDC42 small effector protein 2-C (cdc42se2-c) (Xenopus laevis (African clawed frog)).